The following is a 291-amino-acid chain: Elongation factor Ts, mitochondrial (291 aa).

Belongs to the EF-Ts family.

Its subcellular location is the mitochondrion. Associates with the EF-Tu.GDP complex and induces the exchange of GDP to GTP. It remains bound to the aminoacyl-tRNA.EF-Tu.GTP complex up to the GTP hydrolysis stage on the ribosome. The protein is Elongation factor Ts, mitochondrial of Nematostella vectensis (Starlet sea anemone).